A 231-amino-acid chain; its full sequence is Large ribosomal subunit protein uL1 (231 aa).

It belongs to the universal ribosomal protein uL1 family. As to quaternary structure, part of the 50S ribosomal subunit.

Functionally, binds directly to 23S rRNA. The L1 stalk is quite mobile in the ribosome, and is involved in E site tRNA release. Its function is as follows. Protein L1 is also a translational repressor protein, it controls the translation of the L11 operon by binding to its mRNA. The chain is Large ribosomal subunit protein uL1 from Kosmotoga olearia (strain ATCC BAA-1733 / DSM 21960 / TBF 19.5.1).